The sequence spans 165 residues: Heme oxygenase (165 aa).

It belongs to the heme oxygenase family.

It carries out the reaction heme b + 3 reduced [NADPH--hemoprotein reductase] + 3 O2 = biliverdin IXalpha + CO + Fe(2+) + 3 oxidized [NADPH--hemoprotein reductase] + 3 H2O + H(+). In terms of biological role, catalyzes the opening of the heme ring to form the open-chain tetrapyrrole biliverdin IX with the release of iron and carbon monoxide (CO). The protein is Heme oxygenase (bphO) of Xanthomonas campestris pv. campestris (strain 8004).